Reading from the N-terminus, the 118-residue chain is Protein TusC (118 aa).

This sequence belongs to the DsrF/TusC family. Heterohexamer, formed by a dimer of trimers. The hexameric TusBCD complex contains 2 copies each of TusB, TusC and TusD. The TusBCD complex interacts with TusE.

Its subcellular location is the cytoplasm. Its function is as follows. Part of a sulfur-relay system required for 2-thiolation of 5-methylaminomethyl-2-thiouridine (mnm(5)s(2)U) at tRNA wobble positions. The sequence is that of Protein TusC from Salmonella typhimurium (strain LT2 / SGSC1412 / ATCC 700720).